The primary structure comprises 373 residues: ATP phosphoribosyltransferase regulatory subunit (373 aa).

This sequence belongs to the class-II aminoacyl-tRNA synthetase family. HisZ subfamily. In terms of assembly, heteromultimer composed of HisG and HisZ subunits.

Its subcellular location is the cytoplasm. The protein operates within amino-acid biosynthesis; L-histidine biosynthesis; L-histidine from 5-phospho-alpha-D-ribose 1-diphosphate: step 1/9. Required for the first step of histidine biosynthesis. May allow the feedback regulation of ATP phosphoribosyltransferase activity by histidine. The sequence is that of ATP phosphoribosyltransferase regulatory subunit from Chelativorans sp. (strain BNC1).